We begin with the raw amino-acid sequence, 100 residues long: Mini zinc finger protein 2 (100 aa).

A disordered region spans residues 1–26 (MRKRQVVLRRASPEEPSRSSSTASSL). Residues 33-83 (YGECQKNHAAAVGGYAVDGCREFMASRGEEGTVAALTCAACGCHRSFHRRE) form a ZF-HD dimerization-type; degenerate zinc finger.

In terms of assembly, homo- and heterodimers. Interacts with ZHD1, ZHD3, ZHD5, ZHD8, ZHD10 and ZHD13. In terms of tissue distribution, mostly expressed in stems, flowers and siliques, and, to a lower extent, in inflorescence.

The protein resides in the cytoplasm. In terms of biological role, inhibits zinc finger homeodomain (ZHD) transcription factors by interacting with them to prevent both their nuclear localization and their DNA-binding properties. Involved in integrating signals from multiple hormones by regulating the expression of specific genes. In Arabidopsis thaliana (Mouse-ear cress), this protein is Mini zinc finger protein 2 (MIF2).